A 723-amino-acid chain; its full sequence is Methionine--tRNA ligase (723 aa).

Residues 12–22 (PYANGDIHLGH) carry the 'HIGH' region motif. Residues Cys143, Cys146, Cys156, and Cys159 each contribute to the Zn(2+) site. The 'KMSKS' region signature appears at 345-349 (KMSKS). Lys348 provides a ligand contact to ATP. The disordered stretch occupies residues 568–604 (PAAATAPAKDAKPAKEAGSQQRHAEKQQHAAGVSETA). The 112-residue stretch at 612 to 723 (DFTKVDLRIA…EGAQAGMRVK (112 aa)) folds into the tRNA-binding domain.

It belongs to the class-I aminoacyl-tRNA synthetase family. MetG type 1 subfamily. As to quaternary structure, homodimer. The cofactor is Zn(2+).

It is found in the cytoplasm. The enzyme catalyses tRNA(Met) + L-methionine + ATP = L-methionyl-tRNA(Met) + AMP + diphosphate. Its function is as follows. Is required not only for elongation of protein synthesis but also for the initiation of all mRNA translation through initiator tRNA(fMet) aminoacylation. This is Methionine--tRNA ligase from Azoarcus sp. (strain BH72).